Reading from the N-terminus, the 196-residue chain is Calcium channel flower (196 aa).

3 helical membrane passes run 36 to 56 (LGIVAAFFAILFGLWNVLSII), 67 to 89 (IIQMLAGFVVMALEAPCCFICIE), and 114 to 134 (AVPPIFMCFGLASLFGSGLIF).

It belongs to the calcium channel flower family. In terms of assembly, homomultimer. Associates with the dally/ magu complex.

The protein localises to the cell membrane. The protein resides in the cytoplasmic vesicle. Its subcellular location is the secretory vesicle. It is found in the synaptic vesicle membrane. It localises to the presynaptic cell membrane. The protein localises to the endosome. Its activity is regulated as follows. Channel activity is inhibited by La(3+), which reduces Ca(2+) influx and thus inhibits it's function in promoting activity-dependent bulk endocytosis (ADBE) in response to high stimuli. In terms of biological role, transmembrane protein which mediates synaptic endocytosis, fitness-based cell culling, neuronal culling, morphogen gradient scaling, and calcium transport. Regulates synaptic endocytosis and hence couples exo- with endocytosis. Controls two major modes of synaptic vesicle (SV) endocytosis in the synaptic boutons of neuromuscular junctions (NMJs); Ca(2+) channel-independent Clathrin-mediated endocytosis (CME) in response to mild stimulation, and Ca(2+) channel-dependent activity-dependent bulk endocytosis (ADBE) in response to strong stimulation. Functions in ADBE and subsequent SV reformation from bulk endosomes by initiating Ca(2+) channel-dependent phosphatidylinositol 4,5-bisphosphate (PtdIns(4,5)P2) compartmentalization in synaptic boutons. There it acts at the periactive zone to provide the low Ca(2+) levels required to initiate Calcineurin activation and upregulate PtdIns(4,5)P2. Conversely PtdIns(4,5)P2 enhances fwe Ca(2+) channel-activity, establishing a positive feedback loop that induces PtdIns(4,5)P2 microdomain at the periactive zone. These microdomains trigger bulk membrane invagination (i.e. ADBE) by triggering actin polymerization while also promoting localization of fwe to bulk endosomes, thereby removing the ADBE trigger to reduce endocytosis and prevent excess membrane uptake. PtdIns(4,5)P2 then promotes SV reformation from the bulk endosomes, to coordinate ADBE and subsequent SV reformation. Different combinations of the flower isoforms at the cell membrane are also required for the identification and elimination of suboptimal or supernumerary cells during development, regeneration, and adulthood. Required for the recognition and elimination of unfit cells in the developing wing during cell competition. In the developing pupal retina, mediates the elimination of unwanted postmitotic neurons, including supernumerary photoreceptor neurons that form at the periphery of the retina and are contained within incomplete ommatidia units. Also required for efficient elimination and replacement of old neurons by newly generated neurons during regeneration in the adult brain following mechanical injury. Downstream of the flower fitness fingerprints, cells identified as unwanted or unfit are eliminated via apoptosis through the expression of ahuizotl (azot). However, the cells marked for elimination by the flower isoforms only undergo apoptosis if additional thresholds are met; (1) their neighboring fit/healthy cells express different levels of the fwe isoforms, and (2) the levels of the protective signal SPARC expressed by the loser or unwanted cells are unable to inhibit caspase activation. These additional thresholds for flower-mediated apoptosis, allows useful cells to recover from transient and limited stress before they are unnecessarily eliminated. Functions with dally and magu in a mechanism of scaling, which utilises apoptosis to ensure that the dpp morphogen gradient, which mediates organ growth, remains proportional to the size of the growing wing. In this mechanism, fwe represses dally- and Magu-dependent activity in expanding the gradient, and dally/Magu inhibits fwe-dependent apoptosis to keep cell death rate low. When the levels of these different proteins are optimally regulated the gradient correctly scales with organ growth but when this fails, fwe-mediated apoptosis is activated to trim the developing tissue to match the correct size of the gradient. This Drosophila virilis (Fruit fly) protein is Calcium channel flower.